The sequence spans 520 residues: Cytochrome P450 4F3 (520 aa).

A helical membrane pass occupies residues 11 to 31 (LWPMAASPWLLLLLVGASWLL). 2 residues coordinate heme: Glu-328 and Cys-468.

It belongs to the cytochrome P450 family. Heme is required as a cofactor. As to expression, selectively expressed in blood neutrophils and bone marrow cells. Coexpressed with CYP4F3B in prostate, ileum and trachea. In terms of tissue distribution, selectively expressed in liver and kidney. It is also the predominant CYP4F isoform in trachea and tissues of the gastrointestinal tract.

Its subcellular location is the endoplasmic reticulum membrane. It is found in the microsome membrane. It carries out the reaction an organic molecule + reduced [NADPH--hemoprotein reductase] + O2 = an alcohol + oxidized [NADPH--hemoprotein reductase] + H2O + H(+). It catalyses the reaction leukotriene B4 + reduced [NADPH--hemoprotein reductase] + O2 = 20-hydroxy-leukotriene B4 + oxidized [NADPH--hemoprotein reductase] + H2O + H(+). The catalysed reaction is 20-hydroxy-leukotriene B4 + reduced [NADPH--hemoprotein reductase] + O2 = 20-oxo-leukotriene B4 + oxidized [NADPH--hemoprotein reductase] + 2 H2O + H(+). The enzyme catalyses 20-oxo-leukotriene B4 + reduced [NADPH--hemoprotein reductase] + O2 = 20-carboxy-leukotriene B4 + oxidized [NADPH--hemoprotein reductase] + H2O + 2 H(+). It carries out the reaction (5Z,8Z,11Z)-eicosatrienoate + reduced [NADPH--hemoprotein reductase] + O2 = 20-hydroxy-(5Z,8Z,11Z)-eicosatrienoate + oxidized [NADPH--hemoprotein reductase] + H2O + H(+). It catalyses the reaction (5Z,8Z,11Z,14Z)-eicosatetraenoate + reduced [NADPH--hemoprotein reductase] + O2 = 20-hydroxy-(5Z,8Z,11Z,14Z)-eicosatetraenoate + oxidized [NADPH--hemoprotein reductase] + H2O + H(+). The catalysed reaction is (5Z,8Z,11Z,14Z,17Z)-eicosapentaenoate + reduced [NADPH--hemoprotein reductase] + O2 = 19-hydroxy-(5Z,8Z,11Z,14Z,17Z)-eicosapentaenoate + oxidized [NADPH--hemoprotein reductase] + H2O + H(+). The enzyme catalyses (5Z,8Z,11Z,14Z,17Z)-eicosapentaenoate + reduced [NADPH--hemoprotein reductase] + O2 = 20-hydroxy-(5Z,8Z,11Z,14Z,17Z)-eicosapentaenoate + oxidized [NADPH--hemoprotein reductase] + H2O + H(+). It carries out the reaction (4Z,7Z,10Z,13Z,16Z,19Z)-docosahexaenoate + reduced [NADPH--hemoprotein reductase] + O2 = 21-hydroxy-(4Z,7Z,10Z,13Z,16Z,19Z)-docosahexaenoate + oxidized [NADPH--hemoprotein reductase] + H2O + H(+). It catalyses the reaction (4Z,7Z,10Z,13Z,16Z,19Z)-docosahexaenoate + reduced [NADPH--hemoprotein reductase] + O2 = 22-hydroxy-(4Z,7Z,10Z,13Z,16Z,19Z)-docosahexaenoate + oxidized [NADPH--hemoprotein reductase] + H2O + H(+). The catalysed reaction is 8,9-epoxy-(5Z,11Z,14Z)-eicosatrienoate + reduced [NADPH--hemoprotein reductase] + O2 = 20-hydroxy-8,9-epoxy-(5Z,11Z,14Z)-eicosatrienoate + oxidized [NADPH--hemoprotein reductase] + H2O + H(+). The enzyme catalyses 11,12-epoxy-(5Z,8Z,14Z)-eicosatrienoate + reduced [NADPH--hemoprotein reductase] + O2 = 20-hydroxy-11,12-epoxy-(5Z,8Z,14Z)-eicosatrienoate + oxidized [NADPH--hemoprotein reductase] + H2O + H(+). It carries out the reaction 14,15-epoxy-(5Z,8Z,11Z)-eicosatrienoate + reduced [NADPH--hemoprotein reductase] + O2 = 20-hydroxy-14,15-epoxy-(5Z,8Z,11Z)-eicosatrienoate + oxidized [NADPH--hemoprotein reductase] + H2O + H(+). It catalyses the reaction 12,13-epoxy-(9Z)-octadecenoate + reduced [NADPH--hemoprotein reductase] + O2 = 18-hydroxy-12,13-epoxy-(9Z)-octadecenoate + oxidized [NADPH--hemoprotein reductase] + H2O + H(+). The catalysed reaction is 9,10-epoxy-(12Z)-octadecenoate + reduced [NADPH--hemoprotein reductase] + O2 = 18-hydroxy-9,10-epoxy-(12Z)-octadecenoate + oxidized [NADPH--hemoprotein reductase] + H2O + H(+). The enzyme catalyses 9,10-epoxyoctadecanoate + reduced [NADPH--hemoprotein reductase] + O2 = 18-hydroxy-9,10-epoxy-octadecanoate + oxidized [NADPH--hemoprotein reductase] + H2O + H(+). It carries out the reaction (12R)-hydroxy-(9Z)-octadecenoate + reduced [NADPH--hemoprotein reductase] + O2 = (12R),18-dihydroxy-(9Z)-octadecenoate + oxidized [NADPH--hemoprotein reductase] + H2O + H(+). It catalyses the reaction 12-hydroxyoctadecanoate + reduced [NADPH--hemoprotein reductase] + O2 = 12,18-dihydroxyoctadecanoate + oxidized [NADPH--hemoprotein reductase] + H2O + H(+). The catalysed reaction is 5-hydroxy-(6E,8Z,11Z,14Z)-eicosatetraenoate + reduced [NADPH--hemoprotein reductase] + O2 = 5,20-dihydroxy-(6E,8Z,11Z,14Z)-eicosatetraenoate + oxidized [NADPH--hemoprotein reductase] + H2O + H(+). The enzyme catalyses 8-hydroxy-(5Z,9E,11Z,14Z)-eicosatetraenoate + reduced [NADPH--hemoprotein reductase] + O2 = 8,20-dihydroxy-(5Z,9E,11Z,14Z)-eicosatetraenoate + oxidized [NADPH--hemoprotein reductase] + H2O + H(+). It carries out the reaction 12-hydroxy-(5Z,8Z,10E,14Z)-eicosatetraenoate + reduced [NADPH--hemoprotein reductase] + O2 = 12,20-dihydroxy-(5Z,8Z,10E,14Z)-eicosatetraenoate + oxidized [NADPH--hemoprotein reductase] + H2O + H(+). It catalyses the reaction 5-hydroxy-(6E,8Z,11Z,14Z,17Z)-eicosapentaenoate + reduced [NADPH--hemoprotein reductase] + O2 = 5,20-dihydroxy-(6E,8Z,11Z,14Z,17Z)-eicosapentaenoate + oxidized [NADPH--hemoprotein reductase] + H2O + H(+). The catalysed reaction is lipoxin A4 + reduced [NADPH--hemoprotein reductase] + O2 = 20-hydroxy-lipoxin A4 + oxidized [NADPH--hemoprotein reductase] + H2O + H(+). The enzyme catalyses lipoxin B4 + reduced [NADPH--hemoprotein reductase] + O2 = 20-hydroxy-lipoxin B4 + oxidized [NADPH--hemoprotein reductase] + H2O + H(+). It carries out the reaction 22-hydroxydocosanoate + reduced [NADPH--hemoprotein reductase] + O2 = 22-oxodocosanoate + oxidized [NADPH--hemoprotein reductase] + 2 H2O + H(+). It catalyses the reaction 22-oxodocosanoate + reduced [NADPH--hemoprotein reductase] + O2 = docosanedioate + oxidized [NADPH--hemoprotein reductase] + H2O + 2 H(+). The catalysed reaction is docosanoate + reduced [NADPH--hemoprotein reductase] + O2 = 22-hydroxydocosanoate + oxidized [NADPH--hemoprotein reductase] + H2O + H(+). The enzyme catalyses tetracosanoate + reduced [NADPH--hemoprotein reductase] + O2 = 24-hydroxytetracosanoate + oxidized [NADPH--hemoprotein reductase] + H2O + H(+). It carries out the reaction hexacosanoate + reduced [NADPH--hemoprotein reductase] + O2 = 26-hydroxyhexacosanoate + oxidized [NADPH--hemoprotein reductase] + H2O + H(+). It catalyses the reaction 26-hydroxyhexacosanoate + reduced [NADPH--hemoprotein reductase] + O2 = 26-oxohexacosanoate + oxidized [NADPH--hemoprotein reductase] + 2 H2O + H(+). The catalysed reaction is 26-oxohexacosanoate + reduced [NADPH--hemoprotein reductase] + O2 = hexacosanedioate + oxidized [NADPH--hemoprotein reductase] + H2O + 2 H(+). The enzyme catalyses 3-hydroxyoctadecanoate + reduced [NADPH--hemoprotein reductase] + O2 = 3,18-dihydroxyoctadecanoate + oxidized [NADPH--hemoprotein reductase] + H2O + H(+). It carries out the reaction 3-hydroxyhexadecanoate + reduced [NADPH--hemoprotein reductase] + O2 = 3,16-dihydroxyhexadecanoate + oxidized [NADPH--hemoprotein reductase] + H2O + H(+). It participates in lipid metabolism; leukotriene B4 degradation. It functions in the pathway lipid metabolism; arachidonate metabolism. Inhibited by carbon monoxide (CO). Functionally, a cytochrome P450 monooxygenase involved in the metabolism of various endogenous substrates, including fatty acids and their oxygenated derivatives (oxylipins). Mechanistically, uses molecular oxygen inserting one oxygen atom into a substrate, and reducing the second into a water molecule, with two electrons provided by NADPH via cytochrome P450 reductase (CPR; NADPH-ferrihemoprotein reductase). May play a role in inactivation of pro-inflammatory and anti-inflammatory oxylipins during the resolution of inflammation. In terms of biological role, catalyzes predominantly the oxidation of the terminal carbon (omega-oxidation) of oxylipins in myeloid cells, displaying higher affinity for arachidonate metabolite leukotriene B4 (LTB4). Inactivates LTB4 via three successive oxidative transformations to 20-hydroxy-LTB4, then to 20-oxo-LTB4 and to 20-carboxy-LTB4. Has omega-hydroxylase activity toward long-chain fatty acid epoxides with preference for 8,9-epoxy-(5Z,11Z,14Z)-eicosatrienoate (EET) and 9,10-epoxyoctadecanoate. Omega-hydroxylates monohydroxy polyunsaturated fatty acids (PUFAs), including hydroxyeicosatetraenoates (HETEs) and hydroxyeicosapentaenoates (HEPEs), to dihydroxy compounds. Contributes to the degradation of saturated very long-chain fatty acids (VLCFAs) such as docosanoic acid, by catalyzing successive omega-oxidations to the corresponding dicarboxylic acid, thereby initiating chain shortening. Has low hydroxylase activity toward PUFAs. Its function is as follows. Catalyzes predominantly the oxidation of the terminal carbon (omega-oxidation) of polyunsaturated fatty acids (PUFAs). Participates in the conversion of arachidonic acid to 20-hydroxyeicosatetraenoic acid (20-HETE), a signaling molecule acting both as vasoconstrictive and natriuretic with overall effect on arterial blood pressure. Has high omega-hydroxylase activity toward other PUFAs, including eicosatrienoic acid (ETA), eicosapentaenoic acid (EPA) and docosahexaenoic acid (DHA). Can also catalyze the oxidation of the penultimate carbon (omega-1 oxidation) of PUFAs with lower efficiency. Contributes to the degradation of saturated very long-chain fatty acids (VLCFAs) such as docosanoic acid and hexacosanoic acid, by catalyzing successive omega-oxidations to the corresponding dicarboxylic acids, thereby initiating chain shortening. Omega-hydroxylates long-chain 3-hydroxy fatty acids, likely initiating the oxidative conversion to the corresponding 3-hydroxydicarboxylic fatty acids. Has omega-hydroxylase activity toward long-chain fatty acid epoxides with preference for 8,9-epoxy-(5Z,11Z,14Z)-eicosatrienoate (EET) and 9,10-epoxyoctadecanoate. In Homo sapiens (Human), this protein is Cytochrome P450 4F3.